Reading from the N-terminus, the 422-residue chain is Ubiquitin-conjugating enzyme E2 Q1 (422 aa).

M1 bears the N-acetylmethionine mark. Residues 1–15 (MQQPQPQGQQQPGPG) are compositionally biased toward low complexity. 2 disordered regions span residues 1–40 (MQQP…PGPC) and 174–221 (PLPA…EDDG). The segment covering 16–35 (QQLGGQGAAPGAGGGPGGGP) has biased composition (gly residues). The span at 185-200 (VSSEDEDEEMPEDTED) shows a compositional bias: acidic residues. A compositionally biased stretch (basic and acidic residues) spans 212–221 (AEGKKSEDDG). In terms of domain architecture, UBC core spans 251-415 (QATDRLMKEL…VQIHEKNGWY (165 aa)). Catalysis depends on C351, which acts as the Glycyl thioester intermediate.

Belongs to the ubiquitin-conjugating enzyme family. Monomer and homodimer. Only the homodimer is linked to ubiquitin through thiolester activation. Interacts (via N-terminus) with B4GALT1 (via N-terminal cytoplasmic domain). The interaction is direct. Autoubiquitinated in vitro in the presence of NEDD4L. In terms of tissue distribution, widely expressed.

It localises to the nucleus. The protein resides in the cell projection. It is found in the filopodium. Its subcellular location is the cytoplasm. The protein localises to the cytosol. It catalyses the reaction S-ubiquitinyl-[E1 ubiquitin-activating enzyme]-L-cysteine + [E2 ubiquitin-conjugating enzyme]-L-cysteine = [E1 ubiquitin-activating enzyme]-L-cysteine + S-ubiquitinyl-[E2 ubiquitin-conjugating enzyme]-L-cysteine.. It functions in the pathway protein modification; protein ubiquitination. Catalyzes the covalent attachment of ubiquitin to other proteins. May be involved in hormonal homeostasis in females. Involved in regulation of B4GALT1 cell surface expression, B4GALT1-mediated cell adhesion to laminin and embryoid body formation. This is Ubiquitin-conjugating enzyme E2 Q1 (UBE2Q1) from Homo sapiens (Human).